The following is a 107-amino-acid chain: Ferredoxin 1 (107 aa).

2 4Fe-4S ferredoxin-type domains span residues 2 to 30 (TFVV…YEGP) and 31 to 60 (NFLV…SEDE). [3Fe-4S] cluster-binding residues include Cys-9 and Cys-17. [4Fe-4S] cluster-binding residues include Cys-21, Cys-40, Cys-43, and Cys-46. [3Fe-4S] cluster is bound at residue Cys-50.

Requires [4Fe-4S] cluster as cofactor. [3Fe-4S] cluster serves as cofactor.

In terms of biological role, ferredoxins are iron-sulfur proteins that transfer electrons in a wide variety of metabolic reactions. In Pseudomonas putida (strain ATCC 47054 / DSM 6125 / CFBP 8728 / NCIMB 11950 / KT2440), this protein is Ferredoxin 1 (fdxA).